Here is a 203-residue protein sequence, read N- to C-terminus: Chromophore lyase CpcT/CpeT 3 (203 aa).

The protein belongs to the CpcT/CpeT biliprotein lyase family.

Its function is as follows. Covalently attaches a chromophore to Cys residue(s) of phycobiliproteins. The polypeptide is Chromophore lyase CpcT/CpeT 3 (Gloeobacter violaceus (strain ATCC 29082 / PCC 7421)).